We begin with the raw amino-acid sequence, 525 residues long: Chromosomal replication initiator protein DnaA (525 aa).

The interval 1-71 (MNDFWQHCSA…SDLARDFWNA (71 aa)) is domain I, interacts with DnaA modulators. Residues 71-188 (APIEVQFVLD…GEADSMYERS (118 aa)) are domain II. The tract at residues 160-182 (AAAGRRTWRPGPGAAPANGGEAD) is disordered. Positions 169–181 (PGPGAAPANGGEA) are enriched in low complexity. Positions 189 to 405 (KLNPVLTFDN…GALRKILAYS (217 aa)) are domain III, AAA+ region. Glycine 233, glycine 235, lysine 236, and threonine 237 together coordinate ATP. The interval 406–525 (KFHGREISIE…LHVLEQTLKG (120 aa)) is domain IV, binds dsDNA.

Belongs to the DnaA family. In terms of assembly, oligomerizes as a right-handed, spiral filament on DNA at oriC.

Its subcellular location is the cytoplasm. Functionally, plays an essential role in the initiation and regulation of chromosomal replication. ATP-DnaA binds to the origin of replication (oriC) to initiate formation of the DNA replication initiation complex once per cell cycle. Binds the DnaA box (a 9 base pair repeat at the origin) and separates the double-stranded (ds)DNA. Forms a right-handed helical filament on oriC DNA; dsDNA binds to the exterior of the filament while single-stranded (ss)DNA is stabiized in the filament's interior. The ATP-DnaA-oriC complex binds and stabilizes one strand of the AT-rich DNA unwinding element (DUE), permitting loading of DNA polymerase. After initiation quickly degrades to an ADP-DnaA complex that is not apt for DNA replication. Binds acidic phospholipids. The polypeptide is Chromosomal replication initiator protein DnaA (Burkholderia ambifaria (strain ATCC BAA-244 / DSM 16087 / CCUG 44356 / LMG 19182 / AMMD) (Burkholderia cepacia (strain AMMD))).